The following is a 344-amino-acid chain: MFVDSASFSVSSGKGGPGCASFRREKHVPLGGPDGGDGGNGGDVYFIVDNNTHTLANYKGKRAMKAANGVPGLPRNMTGKKGDNLELIVPPGTAVYDADSNELLLDLISEGQKELFLSGGKGGLGNVHFKTSVNQAPTKAQPGLPGETRNIRLELKLIADVGLVGFPNVGKSTLISSISNAKPQIANYEFTTLTPKLGLVEVDEFSGFIMADIPGIIEGASDGKGLGIQFLKHIERTKVLLYMIDLANYRSLKEQFETLKSEVLKFSPNLAKRDFAIALTRLDAAVDADEKIEEFLNEFKFDKKQDIYEYDRQKPFFVLPISSVAGDGLKELKFGLLEILKGEN.

The segment covering 1–12 has biased composition (polar residues); that stretch reads MFVDSASFSVSS. The segment at 1-36 is disordered; that stretch reads MFVDSASFSVSSGKGGPGCASFRREKHVPLGGPDGG. The 158-residue stretch at 1-158 folds into the Obg domain; it reads MFVDSASFSV…RNIRLELKLI (158 aa). The OBG-type G domain occupies 159 to 341; the sequence is ADVGLVGFPN…LKFGLLEILK (183 aa). GTP is bound by residues 165–172, 190–194, 212–215, 280–283, and 322–324; these read GFPNVGKS, FTTLT, DIPG, TRLD, and SSV. The Mg(2+) site is built by S172 and T192.

It belongs to the TRAFAC class OBG-HflX-like GTPase superfamily. OBG GTPase family. Monomer. It depends on Mg(2+) as a cofactor.

It is found in the cytoplasm. Functionally, an essential GTPase which binds GTP, GDP and possibly (p)ppGpp with moderate affinity, with high nucleotide exchange rates and a fairly low GTP hydrolysis rate. Plays a role in control of the cell cycle, stress response, ribosome biogenesis and in those bacteria that undergo differentiation, in morphogenesis control. This chain is GTPase Obg, found in Campylobacter fetus subsp. fetus (strain 82-40).